A 302-amino-acid polypeptide reads, in one-letter code: m7GpppN-mRNA hydrolase NUDT17 (302 aa).

The Nudix hydrolase domain maps to 89–237; it reads GRGVDLGVAV…DGTETPKHLP (149 aa). Positions 128 to 149 match the Nudix box motif; sequence GHVEPDEELLDGGLRELWEESG. Residues Glu-143 and Glu-147 each coordinate Mg(2+).

This sequence belongs to the Nudix hydrolase family. It depends on Mg(2+) as a cofactor. Requires Mn(2+) as cofactor.

It carries out the reaction a 5'-end (N(7)-methyl 5'-triphosphoguanosine)-ribonucleoside in mRNA + H2O = N(7)-methyl-GDP + a 5'-end phospho-ribonucleoside in mRNA + 2 H(+). Functionally, acts as a decapping enzyme capable of hydrolyzing monomethylated capped RNAs (in vitro). Hydrolyzes monomethylated capped RNA after alpha and beta phosphates to form N(7)-methyl-GDP. Shows low activity towards unmethylated capped RNA. The polypeptide is m7GpppN-mRNA hydrolase NUDT17 (NUDT17) (Bos taurus (Bovine)).